The chain runs to 399 residues: Methylthioribose kinase (399 aa).

Residues Asn40, Lys57, and 111-113 each bind ATP; that span reads EDL. Asp229 contacts substrate. Residue 246 to 248 coordinates ATP; sequence DAE. Substrate is bound at residue Arg344.

Belongs to the methylthioribose kinase family. In terms of assembly, homodimer.

It carries out the reaction 5-(methylsulfanyl)-D-ribose + ATP = 5-(methylsulfanyl)-alpha-D-ribose 1-phosphate + ADP + H(+). Its pathway is amino-acid biosynthesis; L-methionine biosynthesis via salvage pathway; S-methyl-5-thio-alpha-D-ribose 1-phosphate from S-methyl-5'-thioadenosine (hydrolase route): step 2/2. Functionally, catalyzes the phosphorylation of methylthioribose into methylthioribose-1-phosphate. The chain is Methylthioribose kinase from Cronobacter sakazakii (strain ATCC BAA-894) (Enterobacter sakazakii).